The following is a 100-amino-acid chain: Large ribosomal subunit protein bL27 (100 aa).

Residues 1–9 constitute a propeptide that is removed on maturation; it reads MLSINLSLC.

This sequence belongs to the bacterial ribosomal protein bL27 family. The N-terminus is cleaved by ribosomal processing cysteine protease Prp.

The chain is Large ribosomal subunit protein bL27 from Clostridium acetobutylicum (strain ATCC 824 / DSM 792 / JCM 1419 / IAM 19013 / LMG 5710 / NBRC 13948 / NRRL B-527 / VKM B-1787 / 2291 / W).